Consider the following 235-residue polypeptide: UPF0758 protein CD630_11440 (235 aa).

An MPN domain is found at 113–235 (KIMNPWDIQR…YFSFKENMII (123 aa)). Residues histidine 184, histidine 186, and aspartate 197 each coordinate Zn(2+). The JAMM motif signature appears at 184 to 197 (HNHPSGSVEPSRED).

The protein belongs to the UPF0758 family.

The polypeptide is UPF0758 protein CD630_11440 (Clostridioides difficile (strain 630) (Peptoclostridium difficile)).